A 114-amino-acid chain; its full sequence is MTNYHVTLEAAWLVRDVETADDAIGVAISEAGKRLNPKKLDFVEVDVGTTYCPACSEPFGSVFIAANTALVGLVLEMKVFDAESDEHASRIAKSVIGKALTDVPLNVVDVEEFD.

The protein belongs to the UPF0212 family.

This is UPF0212 protein Mbur_0968 from Methanococcoides burtonii (strain DSM 6242 / NBRC 107633 / OCM 468 / ACE-M).